Reading from the N-terminus, the 216-residue chain is Ribosomal RNA small subunit methyltransferase G (216 aa).

S-adenosyl-L-methionine-binding positions include glycine 83, methionine 88, 134-135, and arginine 149; that span reads VE.

The protein belongs to the methyltransferase superfamily. RNA methyltransferase RsmG family.

The protein resides in the cytoplasm. The enzyme catalyses guanosine(527) in 16S rRNA + S-adenosyl-L-methionine = N(7)-methylguanosine(527) in 16S rRNA + S-adenosyl-L-homocysteine. Specifically methylates the N7 position of guanine in position 527 of 16S rRNA. The protein is Ribosomal RNA small subunit methyltransferase G of Pseudomonas putida (strain ATCC 700007 / DSM 6899 / JCM 31910 / BCRC 17059 / LMG 24140 / F1).